The chain runs to 32 residues: Alpha-2-macroglobulin homolog (32 aa).

A cross-link (isoglutamyl cysteine thioester (Cys-Gln)) is located at residues 16–19; the sequence is CGEQ.

It belongs to the protease inhibitor I39 (alpha-2-macroglobulin) family. As to quaternary structure, homodimer; disulfide-linked.

It localises to the secreted. Its function is as follows. Is able to inhibit all four classes of proteinases by a unique 'trapping' mechanism. This protein has a peptide stretch, called the 'bait region' which contains specific cleavage sites for different proteinases. When a proteinase cleaves the bait region, a conformational change is induced in the protein which traps the proteinase. The entrapped enzyme remains active against low molecular weight substrates (activity against high molecular weight substrates is greatly reduced). Following cleavage in the bait region a thioester bond is hydrolyzed and mediates the covalent binding of the protein to the proteinase. The sequence is that of Alpha-2-macroglobulin homolog from Pacifastacus leniusculus (Signal crayfish).